We begin with the raw amino-acid sequence, 422 residues long: UPF0229 protein Spro_2732 (422 aa).

Residues 77–90 show a composition bias toward basic and acidic residues; the sequence is PGNDHFVQNDRVER. A disordered region spans residues 77-109; the sequence is PGNDHFVQNDRVERPQGGGGGGSGQGNASQDGE. Positions 92 to 101 are enriched in gly residues; it reads QGGGGGGSGQ.

It belongs to the UPF0229 family.

The chain is UPF0229 protein Spro_2732 from Serratia proteamaculans (strain 568).